Here is a 440-residue protein sequence, read N- to C-terminus: 2-phosphinomethylmalate synthase (440 aa).

Positions 39 to 313 (VWLSETTHRD…GARVNLPAVN (275 aa)) constitute a Pyruvate carboxyltransferase domain.

This sequence belongs to the alpha-IPM synthase/homocitrate synthase family. In terms of assembly, homodimer. Mn(2+) serves as cofactor. The cofactor is Co(2+).

The catalysed reaction is 3-(hydrohydroxyphosphoryl)pyruvate + acetyl-CoA + H2O = phosphinomethylmalate + CoA + H(+). It participates in secondary metabolite biosynthesis; bialaphos biosynthesis. Its activity is regulated as follows. Strongly inhibited by p-chloromercuribenzoate (pCMB), iodoacetamide (IA) and EDTA. Its function is as follows. Involved in the biosynthesis of phosphinothricin tripeptide (PTT), also known as bialaphos (BA), a natural-product antibiotic and potent herbicide. Catalyzes the condensation berween phosphinopyruvic acid (PPA), an analog of oxalacetic acid, and acetyl-CoA to form R-2-phosphinomethylmalic acid (PMM). Can also act on oxaloacetate, but shows no activity when acetyl-CoA is substituted by propionyl-CoA or butyryl-CoA. The polypeptide is 2-phosphinomethylmalate synthase (Streptomyces hygroscopicus).